The following is a 571-amino-acid chain: Proline--tRNA ligase (571 aa).

The protein belongs to the class-II aminoacyl-tRNA synthetase family. ProS type 1 subfamily. As to quaternary structure, homodimer.

Its subcellular location is the cytoplasm. It carries out the reaction tRNA(Pro) + L-proline + ATP = L-prolyl-tRNA(Pro) + AMP + diphosphate. Functionally, catalyzes the attachment of proline to tRNA(Pro) in a two-step reaction: proline is first activated by ATP to form Pro-AMP and then transferred to the acceptor end of tRNA(Pro). As ProRS can inadvertently accommodate and process non-cognate amino acids such as alanine and cysteine, to avoid such errors it has two additional distinct editing activities against alanine. One activity is designated as 'pretransfer' editing and involves the tRNA(Pro)-independent hydrolysis of activated Ala-AMP. The other activity is designated 'posttransfer' editing and involves deacylation of mischarged Ala-tRNA(Pro). The misacylated Cys-tRNA(Pro) is not edited by ProRS. In Thermodesulfovibrio yellowstonii (strain ATCC 51303 / DSM 11347 / YP87), this protein is Proline--tRNA ligase.